Consider the following 761-residue polypeptide: NADP-dependent malic enzyme (761 aa).

The interval 1–437 is malic enzyme; it reads MPGIDKTDRA…QLSARRDPIA (437 aa). Residue Tyr-49 is the Proton donor of the active site. The active-site Proton acceptor is the Lys-104. The a divalent metal cation site is built by Glu-146, Asp-147, and Asp-172. Residues 205–208, Asn-297, and Asn-329 contribute to the NADP(+) site; that span reads AGAA. The phosphate acetyltransferase stretch occupies residues 438 to 761; sequence STLQRIVERV…AAIAAYNAGT (324 aa).

It in the N-terminal section; belongs to the malic enzymes family. The protein in the C-terminal section; belongs to the phosphate acetyltransferase and butyryltransferase family. In terms of assembly, homooctamer. Mg(2+) is required as a cofactor. Mn(2+) serves as cofactor.

It catalyses the reaction (S)-malate + NADP(+) = pyruvate + CO2 + NADPH. It carries out the reaction oxaloacetate + H(+) = pyruvate + CO2. In Rhizobium meliloti (strain 1021) (Ensifer meliloti), this protein is NADP-dependent malic enzyme (tme).